Consider the following 85-residue polypeptide: Small ribosomal subunit protein bS20 (85 aa).

This sequence belongs to the bacterial ribosomal protein bS20 family.

Binds directly to 16S ribosomal RNA. The sequence is that of Small ribosomal subunit protein bS20 from Cytophaga hutchinsonii (strain ATCC 33406 / DSM 1761 / CIP 103989 / NBRC 15051 / NCIMB 9469 / D465).